The sequence spans 360 residues: Peptide chain release factor 1 (360 aa).

Gln235 bears the N5-methylglutamine mark. A disordered region spans residues 284–313 (AKRQQAEASTRRNLLGSGDRSDRNRTYNFP).

Belongs to the prokaryotic/mitochondrial release factor family. Methylated by PrmC. Methylation increases the termination efficiency of RF1.

The protein resides in the cytoplasm. Functionally, peptide chain release factor 1 directs the termination of translation in response to the peptide chain termination codons UAG and UAA. This chain is Peptide chain release factor 1, found in Salmonella agona (strain SL483).